The chain runs to 204 residues: General odorant-binding protein 67 (204 aa).

Residues 1–22 form the signal peptide; sequence MNPVVCAFGVIFVVVTLELVVA. Cystine bridges form between C57–C85, C81–C147, and C128–C157.

It belongs to the PBP/GOBP family.

It is found in the secreted. Functionally, present in the aqueous fluid surrounding olfactory sensory dendrites and are thought to aid in the capture and transport of hydrophobic odorants into and through this fluid. The polypeptide is General odorant-binding protein 67 (Obp67) (Anopheles gambiae (African malaria mosquito)).